The sequence spans 533 residues: UDP-glucuronosyltransferase 1-2 (533 aa).

The N-terminal stretch at 1–27 (MDTGLCAPLRGLSGLLLLLCALPWAEG) is a signal peptide. N-linked (GlcNAc...) asparagine glycosylation is found at Asn-133, Asn-141, Asn-295, and Asn-433. Residues 491 to 507 (VIGFLLAIVLTVVFIVY) traverse the membrane as a helical segment.

This sequence belongs to the UDP-glycosyltransferase family.

The protein localises to the microsome. The protein resides in the endoplasmic reticulum membrane. The catalysed reaction is glucuronate acceptor + UDP-alpha-D-glucuronate = acceptor beta-D-glucuronoside + UDP + H(+). Functionally, UDPGT is of major importance in the conjugation and subsequent elimination of potentially toxic xenobiotics and endogenous compounds. This chain is UDP-glucuronosyltransferase 1-2 (Ugt1a2), found in Rattus norvegicus (Rat).